Reading from the N-terminus, the 134-residue chain is ATP synthase epsilon chain (134 aa).

The protein belongs to the ATPase epsilon chain family. As to quaternary structure, F-type ATPases have 2 components, CF(1) - the catalytic core - and CF(0) - the membrane proton channel. CF(1) has five subunits: alpha(3), beta(3), gamma(1), delta(1), epsilon(1). CF(0) has three main subunits: a, b and c.

The protein resides in the cell inner membrane. Produces ATP from ADP in the presence of a proton gradient across the membrane. This chain is ATP synthase epsilon chain, found in Nitratidesulfovibrio vulgaris (strain ATCC 29579 / DSM 644 / CCUG 34227 / NCIMB 8303 / VKM B-1760 / Hildenborough) (Desulfovibrio vulgaris).